The following is a 151-amino-acid chain: UPF0178 protein Suden_0449 (151 aa).

The protein belongs to the UPF0178 family.

This is UPF0178 protein Suden_0449 from Sulfurimonas denitrificans (strain ATCC 33889 / DSM 1251) (Thiomicrospira denitrificans (strain ATCC 33889 / DSM 1251)).